A 220-amino-acid chain; its full sequence is Large ribosomal subunit protein uL3 (220 aa).

Residues 137-159 (GASHGAHKNHRKPGSIGGASTPS) are disordered.

Belongs to the universal ribosomal protein uL3 family. In terms of assembly, part of the 50S ribosomal subunit. Forms a cluster with proteins L14 and L19.

In terms of biological role, one of the primary rRNA binding proteins, it binds directly near the 3'-end of the 23S rRNA, where it nucleates assembly of the 50S subunit. In Renibacterium salmoninarum (strain ATCC 33209 / DSM 20767 / JCM 11484 / NBRC 15589 / NCIMB 2235), this protein is Large ribosomal subunit protein uL3.